We begin with the raw amino-acid sequence, 382 residues long: Na(+)/H(+) antiporter NhaA (382 aa).

Helical transmembrane passes span I13–F33, L58–I78, L94–F114, G124–G144, I153–F173, S179–F199, I204–H224, V256–L276, V285–L305, V325–L345, and M357–L377.

Belongs to the NhaA Na(+)/H(+) (TC 2.A.33) antiporter family.

The protein resides in the cell inner membrane. The catalysed reaction is Na(+)(in) + 2 H(+)(out) = Na(+)(out) + 2 H(+)(in). In terms of biological role, na(+)/H(+) antiporter that extrudes sodium in exchange for external protons. The sequence is that of Na(+)/H(+) antiporter NhaA from Legionella pneumophila (strain Paris).